Reading from the N-terminus, the 307-residue chain is Putative S-adenosyl-L-methionine-dependent methyltransferase MMAR_4570 (307 aa).

S-adenosyl-L-methionine-binding positions include Asp-128 and 157–158 (DL).

The protein belongs to the UPF0677 family.

Its function is as follows. Exhibits S-adenosyl-L-methionine-dependent methyltransferase activity. This chain is Putative S-adenosyl-L-methionine-dependent methyltransferase MMAR_4570, found in Mycobacterium marinum (strain ATCC BAA-535 / M).